A 683-amino-acid polypeptide reads, in one-letter code: Receptor-like serine/threonine-protein kinase At2g45590 (683 aa).

The tract at residues methionine 1–aspartate 21 is disordered. Residues methionine 1–proline 30 lie on the Extracellular side of the membrane. The chain crosses the membrane as a helical span at residues leucine 31–isoleucine 51. Residues tyrosine 52–arginine 683 lie on the Cytoplasmic side of the membrane. The Protein kinase domain occupies phenylalanine 92–phenylalanine 664. ATP is bound by residues leucine 98–valine 106 and lysine 121. Residue aspartate 223 is the Proton acceptor of the active site. Positions glutamate 406 to proline 436 are disordered. The span at asparagine 411–valine 424 shows a compositional bias: polar residues. Residues serine 425–proline 436 are compositionally biased toward basic residues.

This sequence belongs to the protein kinase superfamily. Ser/Thr protein kinase family.

Its subcellular location is the cell membrane. It catalyses the reaction L-seryl-[protein] + ATP = O-phospho-L-seryl-[protein] + ADP + H(+). The catalysed reaction is L-threonyl-[protein] + ATP = O-phospho-L-threonyl-[protein] + ADP + H(+). The chain is Receptor-like serine/threonine-protein kinase At2g45590 from Arabidopsis thaliana (Mouse-ear cress).